The primary structure comprises 375 residues: 23S rRNA (uracil(747)-C(5))-methyltransferase RlmC (375 aa).

4 residues coordinate [4Fe-4S] cluster: cysteine 3, cysteine 11, cysteine 14, and cysteine 87. Positions 212, 241, 262, and 307 each coordinate S-adenosyl-L-methionine. Residue cysteine 334 is the Nucleophile of the active site.

This sequence belongs to the class I-like SAM-binding methyltransferase superfamily. RNA M5U methyltransferase family. RlmC subfamily.

It carries out the reaction uridine(747) in 23S rRNA + S-adenosyl-L-methionine = 5-methyluridine(747) in 23S rRNA + S-adenosyl-L-homocysteine + H(+). In terms of biological role, catalyzes the formation of 5-methyl-uridine at position 747 (m5U747) in 23S rRNA. The chain is 23S rRNA (uracil(747)-C(5))-methyltransferase RlmC from Salmonella dublin (strain CT_02021853).